A 440-amino-acid chain; its full sequence is Probable exopolygalacturonase C (440 aa).

The N-terminal stretch at 1-21 (MLITNPALLGILASLVPLALG) is a signal peptide. N-linked (GlcNAc...) asparagine glycosylation is found at asparagine 84 and asparagine 151. PbH1 repeat units follow at residues 188 to 210 (GDDI…PFNT), 217 to 238 (GTNI…AVNT), and 240 to 261 (SHNI…SIGS). A glycan (N-linked (GlcNAc...) asparagine) is linked at asparagine 219. Aspartate 231 serves as the catalytic Proton donor. Histidine 255 is a catalytic residue. The N-linked (GlcNAc...) asparagine glycan is linked to asparagine 271. One copy of the PbH1 4 repeat lies at 272–293 (ITNLRFEDVTVIDALYAARFKS). N-linked (GlcNAc...) asparagine glycosylation occurs at asparagine 313. A disulfide bond links cysteine 389 and cysteine 395. An N-linked (GlcNAc...) asparagine glycan is attached at asparagine 434.

The protein belongs to the glycosyl hydrolase 28 family.

The protein localises to the secreted. The catalysed reaction is [(1-&gt;4)-alpha-D-galacturonosyl](n) + H2O = alpha-D-galacturonate + [(1-&gt;4)-alpha-D-galacturonosyl](n-1). Functionally, specific in hydrolyzing the terminal glycosidic bond of polygalacturonic acid and oligogalacturonates. This Aspergillus fumigatus (strain ATCC MYA-4609 / CBS 101355 / FGSC A1100 / Af293) (Neosartorya fumigata) protein is Probable exopolygalacturonase C (pgxC).